A 183-amino-acid polypeptide reads, in one-letter code: Apo-citrate lyase phosphoribosyl-dephospho-CoA transferase (183 aa).

This sequence belongs to the CitX family.

It carries out the reaction apo-[citrate lyase ACP] + 2'-(5''-triphospho-alpha-D-ribosyl)-3'-dephospho-CoA = holo-[citrate lyase ACP] + diphosphate. Transfers 2-(5''-triphosphoribosyl)-3'-dephosphocoenzyme-A on a serine residue to the apo-acyl carrier protein (gamma chain) of the citrate lyase to yield holo-acyl carrier protein. The protein is Apo-citrate lyase phosphoribosyl-dephospho-CoA transferase of Escherichia coli O7:K1 (strain IAI39 / ExPEC).